A 512-amino-acid polypeptide reads, in one-letter code: DNA-binding protein (512 aa).

A disordered region spans residues 1–105 (MAGRGGSQLE…QDSEDEREAE (105 aa)). The span at 9-21 (LERRRERTPDRGR) shows a compositional bias: basic and acidic residues. The segment covering 69–78 (QEQPPPPQQP) has biased composition (pro residues). Positions 79 to 88 (PKKKPRKTKH) are enriched in basic residues. The span at 96–105 (QDSEDEREAE) shows a compositional bias: acidic residues. Tyr174 bears the Phosphotyrosine; by host mark. Residues Cys263 and His265 each contribute to the Zn(2+) site. Positions 276-310 (IEMDVASENGQRALKENPDRAKVTQNRWGRSVVQL) are flexible loop. Zn(2+) contacts are provided by Cys318, Cys334, Cys376, Cys378, Cys430, and Cys447. The segment at 495 to 512 (VSLPAGHAETSRQNPFDF) is C-terminal arm, DBP binding.

The protein belongs to the adenoviridae E2A DNA-binding protein family. In terms of assembly, homomultimerizes on viral ssDNA bound to pTP. Forms a initiation complex with viral polymerase, pTP and hosts NFIA and POU2F1/OCT1. Interacts with host SRCAP.

It localises to the host nucleus. In terms of biological role, plays a role in the elongation phase of viral strand displacement replication by unwinding the template in an ATP-independent fashion, employing its capacity to form multimers. Also enhances the rate of initiation. Released from template upon second strand synthesis. Assembles in complex with viral pTP, viral pol, host NFIA and host POU2F1/OCT1 on viral origin of replication. Covers the whole ssDNA genome during synthesis. The complementary strand synthesis induces its relese from DNA template. May inhibit cellular transcription mediated by the interaction between host SRCAP and CBP. The polypeptide is DNA-binding protein (Homo sapiens (Human)).